The chain runs to 384 residues: MASLGAILLFAIASLMHGRPIHSDRKGAKIPLAGSNLGYKKSSNMYGSRLFQGMRYPPSMIQLYQTLILGNDTDLSILEYPVLQESDAVLSFLQKVSCVVVGNRWTLSFDMSSISSTNELKLAELRIRLPSFERPQDVTVEIYHTKKGQENLFMGSFKTNPSVAMGSSWKVFNLTRMLQYYLHQGEQFTNDEYIEVKNLHEGAKPQVIKRRARTEVEEGLQGNKDNTPTSSFPTERVVLVVFTRDKPTANHFGSPSLIHTVESSKYVMSESTVRVADARRHRRNQKTKNTIIMNTIPSRSAGNPLCRRVDMIVDFEKIKWGDRIVYPKRFNAYRCEGACPIPLNETFKPTNHAYIKSLVKLYDQEKVECSSCVPVKMSPLSMLL.

Residues 1–18 form the signal peptide; the sequence is MASLGAILLFAIASLMHG. A propeptide spanning residues 19–283 is cleaved from the precursor; that stretch reads RPIHSDRKGA…RVADARRHRR (265 aa). 3 N-linked (GlcNAc...) asparagine glycosylation sites follow: asparagine 71, asparagine 173, and asparagine 344. A disulfide bond links cysteine 306 and cysteine 372.

This sequence belongs to the TGF-beta family. In terms of assembly, homodimer; disulfide-linked. Forms heterodimers with the TGF-beta family member derriere. Interacts with tsku; enhances nodal2 activity.

It localises to the secreted. In terms of biological role, cooperation and regulatory loops of multiple nodals are essential for mesendoderm patterning in early embryos. Essential for mesoderm formation and axial patterning during embryonic development. Activates the activin-like signaling pathway to induce dorsal and ventral mesoderm in animal cap ectoderm. In addition, also dorsalizes ventral marginal zone (VMZ) tissues during gastrulation. Induces muscle actin. Appears to act as both a short-range and long-range morphogen. The unprocessed protein inhibits bmp- and wnt-signaling. The chain is Nodal homolog 2-B (nodal2-b) from Xenopus laevis (African clawed frog).